We begin with the raw amino-acid sequence, 240 residues long: B-cell receptor-associated protein 29 (240 aa).

Topologically, residues 1–6 (MTLQWT) are lumenal. Residues 7–27 (AVATFLYAEIGLILIFCLPFI) form a helical membrane-spanning segment. The Cytoplasmic portion of the chain corresponds to 28–43 (PPQRWQKIFSFSVWGK). A helical transmembrane segment spans residues 44–64 (IASFWNKAFLTIIILLIVLFL). The Lumenal segment spans residues 65 to 103 (DAVREVRKYSSTHTIEKSSASRPAAYEHTQMKLFRSQRN). A helical transmembrane segment spans residues 104-124 (LYISGFSLFFWLVLRRLVTLI). At 125–240 (TQLAKELSHK…DRAGKDKKCL (116 aa)) the chain is on the cytoplasmic side. The stretch at 166–233 (GKEEEHILEA…REHSELQDRA (68 aa)) forms a coiled coil. The short motif at 237–240 (KKCL) is the Di-lysine motif element.

Belongs to the BCAP29/BCAP31 family. Homodimer and heterodimer with BCAP31. Binds CASP8 as a complex containing BCAP31, BCAP29, BCL2 and/or BCL2L1. Interacts with VAMP3, VAMP1 and membrane IgD immunoglobulins. May interact with ACTG1 and non-muscle myosin II.

The protein resides in the endoplasmic reticulum membrane. Its function is as follows. May play a role in anterograde transport of membrane proteins from the endoplasmic reticulum to the Golgi. May be involved in CASP8-mediated apoptosis. The sequence is that of B-cell receptor-associated protein 29 (BCAP29) from Bos taurus (Bovine).